We begin with the raw amino-acid sequence, 409 residues long: Serine/threonine transporter SstT (409 aa).

The next 9 helical transmembrane spans lie at 17 to 37 (LVGQ…FFPA), 49 to 69 (FVSA…MASI), 83 to 103 (ILLL…IASF), 142 to 162 (ALIS…GIAF), 180 to 200 (VSLI…GLVA), 218 to 238 (LVVL…LIVF), 301 to 321 (GAAI…GIAV), 331 to 351 (VVAS…LLLI), and 357 to 377 (LFGI…IIAI).

This sequence belongs to the dicarboxylate/amino acid:cation symporter (DAACS) (TC 2.A.23) family.

It localises to the cell inner membrane. The enzyme catalyses L-serine(in) + Na(+)(in) = L-serine(out) + Na(+)(out). It catalyses the reaction L-threonine(in) + Na(+)(in) = L-threonine(out) + Na(+)(out). Functionally, involved in the import of serine and threonine into the cell, with the concomitant import of sodium (symport system). This is Serine/threonine transporter SstT from Pseudomonas aeruginosa (strain UCBPP-PA14).